The primary structure comprises 66 residues: Large ribosomal subunit protein uL29 (66 aa).

It belongs to the universal ribosomal protein uL29 family.

The polypeptide is Large ribosomal subunit protein uL29 (Roseiflexus castenholzii (strain DSM 13941 / HLO8)).